Reading from the N-terminus, the 144-residue chain is Large ribosomal subunit protein uL15 (144 aa).

The interval 1 to 53 (MRLNTLSPAEGAKHNAKRLGRGIGSGLGKTSGRGHKGQKARTGGGVRRGFEGG) is disordered. A compositionally biased stretch (gly residues) spans 21–31 (RGIGSGLGKTS).

This sequence belongs to the universal ribosomal protein uL15 family. Part of the 50S ribosomal subunit.

In terms of biological role, binds to the 23S rRNA. In Histophilus somni (strain 129Pt) (Haemophilus somnus), this protein is Large ribosomal subunit protein uL15.